Reading from the N-terminus, the 414-residue chain is Multifunctional CCA protein (414 aa).

ATP contacts are provided by glycine 8 and arginine 11. CTP contacts are provided by glycine 8 and arginine 11. 2 residues coordinate Mg(2+): aspartate 21 and aspartate 23. ATP-binding residues include arginine 91, arginine 137, and arginine 140. The CTP site is built by arginine 91, arginine 137, and arginine 140. The HD domain occupies 226–327 (TGVHVMMVVD…VTLFERCDAF (102 aa)).

The protein belongs to the tRNA nucleotidyltransferase/poly(A) polymerase family. Bacterial CCA-adding enzyme type 1 subfamily. As to quaternary structure, monomer. Can also form homodimers and oligomers. Requires Mg(2+) as cofactor. The cofactor is Ni(2+).

It catalyses the reaction a tRNA precursor + 2 CTP + ATP = a tRNA with a 3' CCA end + 3 diphosphate. It carries out the reaction a tRNA with a 3' CCA end + 2 CTP + ATP = a tRNA with a 3' CCACCA end + 3 diphosphate. Catalyzes the addition and repair of the essential 3'-terminal CCA sequence in tRNAs without using a nucleic acid template. Adds these three nucleotides in the order of C, C, and A to the tRNA nucleotide-73, using CTP and ATP as substrates and producing inorganic pyrophosphate. tRNA 3'-terminal CCA addition is required both for tRNA processing and repair. Also involved in tRNA surveillance by mediating tandem CCA addition to generate a CCACCA at the 3' terminus of unstable tRNAs. While stable tRNAs receive only 3'-terminal CCA, unstable tRNAs are marked with CCACCA and rapidly degraded. In Herminiimonas arsenicoxydans, this protein is Multifunctional CCA protein.